The sequence spans 442 residues: MSEKKRRGGAGAGAASGSASKKPRVSTAASYAESLRSKLRPDASILATLRSLASACSKSKPAGSSSSSSSASKALAAEDDPAASYIVVADQDSASVTSRINRLVLAAARSILSGRGFSFAVPSRAASNQVYLPDLDRIVLVRRESARPFANVATARKATITARVLSLVHAVLRRGIHVTKRDLFYTDVKLFGDQAQSDAVLDDVSCMLGCTRSSLHVVASEKGVVVGRLTFADDGDRIDCTRMGVGGKAIPPNIDRVSGIESDALFILLVEKDAAFMRLAEDRFYNRFPCIILTAKGQPDVATRLFLRRLKVELKLPVLALVDSDPYGLKILSVYMCGSKNMSYDSANLTTPDIKWLGVRPSDLDKYRVPEQCRLPMTDHDIKVGKELLEEDFVKQNEGWVKELETMLRTRQKAEIQALSSFGFQYLTEVYLPLKLQQQDWI.

The segment at 1–34 (MSEKKRRGGAGAGAASGSASKKPRVSTAASYAES) is disordered. The Topo IIA-type catalytic domain occupies 91–224 (QDSASVTSRI…LHVVASEKGV (134 aa)). Tyr185 acts as the O-(5'-phospho-DNA)-tyrosine intermediate in catalysis. Residues Glu271 and Asp323 each coordinate Mg(2+).

This sequence belongs to the TOP6A family. Homodimer. Heterotetramer of two TOP6A and two TOP6B subunits. Interacts with TOP6B. Mg(2+) is required as a cofactor. As to expression, highly expressed in flowers before pollination. Expressed in roots and shoots.

It is found in the nucleus. It carries out the reaction ATP-dependent breakage, passage and rejoining of double-stranded DNA.. Its function is as follows. Component of the DNA topoisomerase VI involved in chromatin organization and progression of endoreduplication cycles. Relaxes both positive and negative superturns and exhibits a strong decatenase activity. May be involved in cell proliferation and stress tolerance. The protein is DNA topoisomerase 6 subunit A3 of Oryza sativa subsp. indica (Rice).